Here is a 419-residue protein sequence, read N- to C-terminus: Tyrosine--tRNA ligase (419 aa).

Position 34 (Tyr34) interacts with L-tyrosine. The 'HIGH' region signature appears at 39–48 (PTADSLHLGN). Residues Tyr169 and Gln173 each contribute to the L-tyrosine site. The short motif at 229-233 (KFGKS) is the 'KMSKS' region element. ATP is bound at residue Lys232. Positions 353-419 (LTLVELLISA…GKKKNFVLTY (67 aa)) constitute an S4 RNA-binding domain.

The protein belongs to the class-I aminoacyl-tRNA synthetase family. TyrS type 1 subfamily. As to quaternary structure, homodimer.

It is found in the cytoplasm. It catalyses the reaction tRNA(Tyr) + L-tyrosine + ATP = L-tyrosyl-tRNA(Tyr) + AMP + diphosphate + H(+). Its function is as follows. Catalyzes the attachment of tyrosine to tRNA(Tyr) in a two-step reaction: tyrosine is first activated by ATP to form Tyr-AMP and then transferred to the acceptor end of tRNA(Tyr). This is Tyrosine--tRNA ligase from Lactococcus lactis subsp. lactis (strain IL1403) (Streptococcus lactis).